Here is a 238-residue protein sequence, read N- to C-terminus: Probable transcriptional regulatory protein CPn_0573/CP_0176/CPj0573/CpB0595 (238 aa).

The tract at residues 1-20 (MAGHSKWANTKHRKERADHK) is disordered. The segment covering 9-20 (NTKHRKERADHK) has biased composition (basic residues).

Belongs to the TACO1 family.

Its subcellular location is the cytoplasm. The polypeptide is Probable transcriptional regulatory protein CPn_0573/CP_0176/CPj0573/CpB0595 (Chlamydia pneumoniae (Chlamydophila pneumoniae)).